We begin with the raw amino-acid sequence, 599 residues long: Peptidyl-Asp metalloendopeptidase (599 aa).

An N-terminal signal peptide occupies residues 1-20 (MKKSLLCSTLALAVASAAQA). Residue His164 coordinates Zn(2+). Glu165 is an active-site residue. Zn(2+) is bound by residues His168 and His174. The interval 265–285 (PTKVPGTVNPGSGGDTPTPPD) is disordered. The CBM-cenC domain maps to 458 to 583 (YDFESGIGGW…KRAELMILSG (126 aa)).

Belongs to the peptidase M72 family. Interacts with BamI, the product of its coregulated adjacent gene, which inhibits its protease activity. The cofactor is Zn(2+). Post-translationally, made as a membrane-associated pre-pro-protein, which is exported to the periplasm with removal of the signal peptide, leading to a protein with a molecular mass of 65 kDa, that likely contains the metzincin domain plus tandem carbohydrate-binding domains. Undergoes processing during export to the extracellular milieu, probably by autocatalysis, yielding a (mature length) 25 kDa protein that most likely corresponds to the metzincin domain only.

It localises to the secreted. It carries out the reaction Cleavage of Xaa-|-Asp, Xaa-|-Glu and Xaa-|-cysteic acid bonds.. Is inhibited by BamI, the product of its coregulated adjacent gene. In terms of biological role, metalloprotease with endopeptidase activity. Specifically cleaves on the N-terminal side of aspartyl, glutamyl and cysteic acid residues. Mep72 appears to be a secreted biofilm-specific regulator that affects the processing of a very specific subset of virulence factors exported by the type III secretion machinery as well as flagellar proteins. Binds directly to ExoS and PcrV and affects the processing of these proteins in the biofilm secretome, but contrary to expectation, Mep72 seems to protect these targets against proteolytic processing/degradation. The polypeptide is Peptidyl-Asp metalloendopeptidase (Pseudomonas aeruginosa (strain ATCC 15692 / DSM 22644 / CIP 104116 / JCM 14847 / LMG 12228 / 1C / PRS 101 / PAO1)).